The primary structure comprises 220 residues: uncharacterized protein (220 aa).

Helical transmembrane passes span 6–26 (FSILVDFAAGGLVLASVLIVW), 33–53 (IVRLLAWQGAALAAIPLLRGI), 59–79 (ALIAVGIAVLALRALVLPWLL), 103–123 (LLITAGLTLTAFAITQPVVNL), 126–146 (GVTINAVPAAFAVVLIALFVM), 157–177 (AGFLMLDNGIAATAFLLTAGV), and 179–199 (LIVELGASLDVLFAVIVIGVL).

The protein localises to the cell membrane. This is an uncharacterized protein from Mycobacterium tuberculosis (strain ATCC 25618 / H37Rv).